The following is a 106-amino-acid chain: Nucleoid-associated protein BBta_7345 (106 aa).

The protein belongs to the YbaB/EbfC family. Homodimer.

The protein resides in the cytoplasm. It is found in the nucleoid. Binds to DNA and alters its conformation. May be involved in regulation of gene expression, nucleoid organization and DNA protection. This chain is Nucleoid-associated protein BBta_7345, found in Bradyrhizobium sp. (strain BTAi1 / ATCC BAA-1182).